We begin with the raw amino-acid sequence, 342 residues long: Trans-enoyl reductase himH (342 aa).

46 to 49 (TDWK) is an NADP(+) binding site. 133 to 140 (LSVSTAAS) contacts substrate. Residues 168 to 171 (SSSV), 191 to 194 (SQAN), 255 to 256 (VM), and 329 to 330 (VS) each bind NADP(+).

The protein belongs to the zinc-containing alcohol dehydrogenase family. Monomer.

It participates in secondary metabolite biosynthesis. Trans-enoyl reductase; part of the him gene cluster that mediates the biosynthesis of himeic acid A, a ubiquitin-activating enzyme (E1) inhibitor. First, himA, together with the trans-enoyl reductase himH, catalyzes the formation of apolyketide chain, which is then condensed with leucine by the NRPS activity of himA. Dieckmann cyclization and release from himA gives a tetramic acid intermediate as the product of himA PKS-NRPS. HimG then catalyzes alpha-oxidation of the tetramic acid ring, with a subsequent rearrangement to yield apyrone intermediate. Two terminal methyl groups of polyketide and amide side chains are oxidized to carboxylic acids by himC cytochrome P450 monooxygenase to form himeic acid A. Himeic acid A is further converted to himeic acid B and C during culture growth. No gene responsible for pyrone to pyridone conversion was found in the him gene cluster and himeic acid A is non-enzymatically converted to himeic acid C by the incorporation of an ammonium nitrogen atom in a pH5 buffer, and to himeic acid B at a conversion ratio of 50% during incubation in MeOH for 5 days. The sequence is that of Trans-enoyl reductase himH from Aspergillus japonicus.